A 45-amino-acid chain; its full sequence is Photosystem II reaction center protein K (45 aa).

The propeptide occupies 1 to 8 (MEAVLLLA). Residues 24 to 44 (MPVIPLFFLALAFVWQAAVGF) traverse the membrane as a helical segment.

Belongs to the PsbK family. In terms of assembly, PSII is composed of 1 copy each of membrane proteins PsbA, PsbB, PsbC, PsbD, PsbE, PsbF, PsbH, PsbI, PsbJ, PsbK, PsbL, PsbM, PsbT, PsbX, PsbY, PsbZ, Psb30/Ycf12, peripheral proteins PsbO, CyanoQ (PsbQ), PsbU, PsbV and a large number of cofactors. It forms dimeric complexes.

It is found in the cellular thylakoid membrane. One of the components of the core complex of photosystem II (PSII). PSII is a light-driven water:plastoquinone oxidoreductase that uses light energy to abstract electrons from H(2)O, generating O(2) and a proton gradient subsequently used for ATP formation. It consists of a core antenna complex that captures photons, and an electron transfer chain that converts photonic excitation into a charge separation. This Acaryochloris marina (strain MBIC 11017) protein is Photosystem II reaction center protein K.